We begin with the raw amino-acid sequence, 214 residues long: Thymidylate kinase (214 aa).

Position 10 to 17 (10 to 17 (GGEGAGKS)) interacts with ATP.

Belongs to the thymidylate kinase family.

The catalysed reaction is dTMP + ATP = dTDP + ADP. Functionally, phosphorylation of dTMP to form dTDP in both de novo and salvage pathways of dTTP synthesis. This is Thymidylate kinase from Brucella suis biovar 1 (strain 1330).